The chain runs to 303 residues: Recombination-associated protein RdgC (303 aa).

It belongs to the RdgC family.

The protein localises to the cytoplasm. The protein resides in the nucleoid. Functionally, may be involved in recombination. The chain is Recombination-associated protein RdgC from Yersinia enterocolitica serotype O:8 / biotype 1B (strain NCTC 13174 / 8081).